The sequence spans 223 residues: Kynurenine formamidase (223 aa).

Phe34 contacts substrate. Zn(2+) contacts are provided by His64, His68, and Asp70. The active-site Proton donor/acceptor is the His74. 2 residues coordinate Zn(2+): His174 and Glu186.

This sequence belongs to the Cyclase 1 superfamily. KynB family. Homodimer. Zn(2+) serves as cofactor.

The enzyme catalyses N-formyl-L-kynurenine + H2O = L-kynurenine + formate + H(+). The protein operates within amino-acid degradation; L-tryptophan degradation via kynurenine pathway; L-kynurenine from L-tryptophan: step 2/2. Its function is as follows. Catalyzes the hydrolysis of N-formyl-L-kynurenine to L-kynurenine, the second step in the kynurenine pathway of tryptophan degradation. In Polaromonas naphthalenivorans (strain CJ2), this protein is Kynurenine formamidase.